The following is a 185-amino-acid chain: Ribosome-recycling factor (185 aa).

Belongs to the RRF family.

It is found in the cytoplasm. Functionally, responsible for the release of ribosomes from messenger RNA at the termination of protein biosynthesis. May increase the efficiency of translation by recycling ribosomes from one round of translation to another. This chain is Ribosome-recycling factor, found in Chloroflexus aurantiacus (strain ATCC 29364 / DSM 637 / Y-400-fl).